A 332-amino-acid chain; its full sequence is DNA-directed RNA polymerase subunit alpha (332 aa).

Residues Met-1–Glu-231 are alpha N-terminal domain (alpha-NTD). The segment at Leu-262–Asn-332 is alpha C-terminal domain (alpha-CTD).

It belongs to the RNA polymerase alpha chain family. In terms of assembly, in plastids the minimal PEP RNA polymerase catalytic core is composed of four subunits: alpha, beta, beta', and beta''. When a (nuclear-encoded) sigma factor is associated with the core the holoenzyme is formed, which can initiate transcription.

Its subcellular location is the plastid. The catalysed reaction is RNA(n) + a ribonucleoside 5'-triphosphate = RNA(n+1) + diphosphate. In terms of biological role, DNA-dependent RNA polymerase catalyzes the transcription of DNA into RNA using the four ribonucleoside triphosphates as substrates. In Cuscuta japonica (Japanese dodder), this protein is DNA-directed RNA polymerase subunit alpha.